Consider the following 358-residue polypeptide: Presenilin hop-1 (358 aa).

Over 1-12 the chain is Cytoplasmic; sequence MPRTKRVYSGKT. The helical transmembrane segment at 13-33 threads the bilayer; that stretch reads ITGVLYPVAICMLFVAINVKL. Over 34–57 the chain is Lumenal; it reads SQPEQQEQSKVVYGLFHSYDTADS. A helical transmembrane segment spans residues 58–78; it reads GTITLYLIGFLILTTSLGVFC. Topologically, residues 79 to 86 are cytoplasmic; sequence YQMKFYKA. Residues 87 to 107 form a helical membrane-spanning segment; sequence IKVYVLANSIGILLVYSVFHF. Residues 108–115 lie on the Lumenal side of the membrane; the sequence is QRIAEAQS. A helical transmembrane segment spans residues 116–136; the sequence is IPVSVPTFFFLILQFGGLGIT. Over 137-148 the chain is Cytoplasmic; it reads CLHWKSHRRLHQ. Residues 149–169 traverse the membrane as a helical segment; it reads FYLIMLAGLTAIFILNILPDW. Residue threonine 170 is a topological domain, lumenal. The chain crosses the membrane as a helical span at residues 171–191; the sequence is VWMALTAISFWDIVAVLTPCG. The active site involves aspartate 182. Residues 192–273 are Cytoplasmic-facing; sequence PLKMLVETAN…EVREVEGTIR (82 aa). Residues 221-240 show a composition bias toward polar residues; it reads EVDSPDTTRSNSTPLTEFNN. The interval 221-242 is disordered; that stretch reads EVDSPDTTRSNSTPLTEFNNSS. Residues 274–294 form a helical membrane-spanning segment; the sequence is LGMGDFVFYSLMLGNTVQTCP. Residue aspartate 278 is part of the active site. Over 295–297 the chain is Lumenal; that stretch reads LPT. The chain crosses the membrane as a helical span at residues 298–318; sequence VVACFVSNLVGLTITLPIVTL. The Cytoplasmic portion of the chain corresponds to 319–321; it reads SQT. The segment at residues 322 to 342 is an intramembrane region (helical); the sequence is ALPALPFPLAIAAIFYFSSHI. The PAL signature appears at 324 to 326; it reads PAL. The Cytoplasmic segment spans residues 343-358; it reads ALTPFTDLCTSQLILI.

This sequence belongs to the peptidase A22A family. Homodimer. Component of the gamma-secretase complex, a complex probably composed of the presenilin homodimer (sel-12, hop-1 or spe-4), nicastrin (aph-2), aph-1 and pen-2. As to expression, weakly expressed.

The protein localises to the endoplasmic reticulum membrane. It localises to the golgi apparatus membrane. Probable catalytic subunit of the gamma-secretase complex, an endoprotease complex that catalyzes the intramembrane cleavage of integral membrane proteins such as Notch receptors (lin-12 or glp-1). Probably works redundantly of lin-12, which provides more presenilin function. The protein is Presenilin hop-1 (hop-1) of Caenorhabditis elegans.